A 426-amino-acid chain; its full sequence is Adenylosuccinate synthetase (426 aa).

Residues glycine 12–lysine 18 and glycine 40–threonine 42 contribute to the GTP site. The Proton acceptor role is filled by aspartate 13. Mg(2+) contacts are provided by aspartate 13 and glycine 40. Residues aspartate 13–lysine 16, asparagine 38–histidine 41, threonine 130, arginine 144, glutamine 224, threonine 239, and arginine 303 each bind IMP. Histidine 41 (proton donor) is an active-site residue. Position 299–305 (threonine 299–arginine 305) interacts with substrate. GTP is bound by residues arginine 305, lysine 331–aspartate 333, and serine 413–glycine 415.

This sequence belongs to the adenylosuccinate synthetase family. As to quaternary structure, homodimer. Mg(2+) serves as cofactor.

Its subcellular location is the cytoplasm. The catalysed reaction is IMP + L-aspartate + GTP = N(6)-(1,2-dicarboxyethyl)-AMP + GDP + phosphate + 2 H(+). The protein operates within purine metabolism; AMP biosynthesis via de novo pathway; AMP from IMP: step 1/2. Functionally, plays an important role in the de novo pathway of purine nucleotide biosynthesis. Catalyzes the first committed step in the biosynthesis of AMP from IMP. The polypeptide is Adenylosuccinate synthetase (Anaplasma marginale (strain St. Maries)).